The following is a 253-amino-acid chain: Light-harvesting complex stress-related protein 1, chloroplastic (253 aa).

The transit peptide at 1 to 39 directs the protein to the chloroplast; it reads MAMMMRKAAAVPASSRRSVAVNSVSGKRTVSGKAGAPVP. Tyr-45 lines the chlorophyll b pocket. The chlorophyll a site is built by Phe-60, Glu-81, and His-84. Position 86 (Arg-86) interacts with chlorophyll b. A helical membrane pass occupies residues 87 to 107; the sequence is VAMLAALGFIVGEQLQDFPLF. Residue Gln-124 coordinates chlorophyll a. A helical membrane pass occupies residues 131 to 151; sequence EPLLIAIGVAESYRVAVGWAT. The chlorophyll b site is built by Glu-141 and Arg-144. Chlorophyll a contacts are provided by Lys-190, Glu-191, Asn-194, Arg-196, and Gln-208. Residues 197–217 form a helical membrane-spanning segment; that stretch reads LAMIAIAAFVAQELVEQTEIF.

It belongs to the light-harvesting chlorophyll a/b-binding (LHC) protein family.

The protein resides in the plastid. Its subcellular location is the chloroplast thylakoid membrane. Functionally, required for non-photochemical quenching (NPQ), a mechanism that converts and dissipates the harmful excess absorbed light energy into heat and protect the photosynthetic apparatus from photo-oxidative damage. Is able to sense luminal acidification of the thylakoid membranes, which occurs along with elevated electron flow caused by excess light, and to induce a large, fast, and reversible pH-dependent quenching in LHCII-containing membranes. Mediates excitation energy transfer from light-harvesting complex II (LHCII) to photosystem I (PSI), rather than photosystem II (PSII), at low pH, which mimics the acidified lumen of the thylakoid membranes in high light-exposed chloroplasts. Activates PSI-dependent fluorescence quenching in addition to dissipating excitation energy in LHCII to avoid photooxidative stress under excess light. The chain is Light-harvesting complex stress-related protein 1, chloroplastic from Chlamydomonas reinhardtii (Chlamydomonas smithii).